A 122-amino-acid polypeptide reads, in one-letter code: Autophagy-related protein 8b (122 aa).

Glycine 117 carries the Phosphatidylethanolamine amidated glycine lipid modification. Residues 118-122 (GSFYC) constitute a propeptide, removed in mature form.

It belongs to the ATG8 family. As to quaternary structure, interacts with ATG4. Interacts with NBR1. In terms of processing, the C-terminal 5 residues are removed by ATG4 to expose Gly-117 at the C-terminus. This Gly-117 forms then a thioester bond with the 'Cys-558' of ATG7 (E1-like activating enzyme) before being transferred to the 'Cys-258' of ATG3 (the specific E2 conjugating enzyme), in order to be finally amidated with phosphatidylethanolamine. This lipid modification anchors ATG8 to autophagosomes. As to expression, constitutively expressed.

The protein resides in the cytoplasmic vesicle. The protein localises to the autophagosome membrane. It localises to the vacuole membrane. Its subcellular location is the cytoplasm. It is found in the cytoskeleton. Functionally, ubiquitin-like modifier involved in autophagosomes formation. May mediate the delivery of the autophagosomes to the vacuole via the microtubule cytoskeleton. This chain is Autophagy-related protein 8b (ATG8B), found in Arabidopsis thaliana (Mouse-ear cress).